The sequence spans 101 residues: Ubiquitin-like protein SMT3 (101 aa).

Serine 2 bears the N-acetylserine mark. A phosphoserine mark is found at serine 2 and serine 4. One can recognise a Ubiquitin-like domain in the interval 22-98; sequence THINLKVSDG…IEAHREQIGG (77 aa). Residue glycine 98 forms a Glycyl lysine isopeptide (Gly-Lys) (interchain with K-? in acceptor proteins) linkage. Positions 99–101 are excised as a propeptide; that stretch reads ATY.

Belongs to the ubiquitin family. SUMO subfamily. Activated by a E1 ligase composed of AOS1 and UBA2.

Functionally, not known; suppressor of MIF2 mutations. This Saccharomyces cerevisiae (strain ATCC 204508 / S288c) (Baker's yeast) protein is Ubiquitin-like protein SMT3 (SMT3).